Here is a 485-residue protein sequence, read N- to C-terminus: ATP-dependent 6-phosphofructokinase (485 aa).

ATP-binding positions include glycine 105, 171-172 (RG), and 196-199 (GDGT). Aspartate 197 serves as a coordination point for Mg(2+). Substrate-binding positions include 225 to 227 (TID), 270 to 272 (MGR), glutamate 323, and 378 to 381 (YMIR). Aspartate 227 functions as the Proton acceptor in the catalytic mechanism. The Peroxisomal targeting signal signature appears at 483–485 (SKL).

The protein belongs to the phosphofructokinase type A (PFKA) family. PPi-dependent PFK group II subfamily. Atypical ATP-dependent clade 'X' sub-subfamily. As to quaternary structure, homotetramer. Mg(2+) is required as a cofactor.

The protein localises to the glycosome. It catalyses the reaction beta-D-fructose 6-phosphate + ATP = beta-D-fructose 1,6-bisphosphate + ADP + H(+). Its pathway is carbohydrate degradation; glycolysis; D-glyceraldehyde 3-phosphate and glycerone phosphate from D-glucose: step 3/4. With respect to regulation, allosterically activated by AMP. In terms of biological role, catalyzes the phosphorylation of D-fructose 6-phosphate to fructose 1,6-bisphosphate by ATP, the first committing step of glycolysis. This chain is ATP-dependent 6-phosphofructokinase, found in Trypanosoma cruzi (strain CL Brener).